A 118-amino-acid chain; its full sequence is Small ribosomal subunit protein uS13 (118 aa).

The disordered stretch occupies residues 95–118 (LPLRGQRTRTNARTRKGPRKAIKK).

This sequence belongs to the universal ribosomal protein uS13 family. Part of the 30S ribosomal subunit. Forms a loose heterodimer with protein S19. Forms two bridges to the 50S subunit in the 70S ribosome.

Its function is as follows. Located at the top of the head of the 30S subunit, it contacts several helices of the 16S rRNA. In the 70S ribosome it contacts the 23S rRNA (bridge B1a) and protein L5 of the 50S subunit (bridge B1b), connecting the 2 subunits; these bridges are implicated in subunit movement. Contacts the tRNAs in the A and P-sites. The polypeptide is Small ribosomal subunit protein uS13 (Xylella fastidiosa (strain 9a5c)).